We begin with the raw amino-acid sequence, 505 residues long: Maturase K (505 aa).

Belongs to the intron maturase 2 family. MatK subfamily.

Its subcellular location is the plastid. It localises to the chloroplast. In terms of biological role, usually encoded in the trnK tRNA gene intron. Probably assists in splicing its own and other chloroplast group II introns. This is Maturase K from Nuphar variegata (Yellow pond lily).